A 956-amino-acid chain; its full sequence is Netrin receptor UNC5D (956 aa).

Positions M1–A30 are cleaved as a signal peptide. The Extracellular portion of the chain corresponds to A31–D382. The 98-residue stretch at P52–S149 folds into the Ig-like domain. Disulfide bonds link C73–C134, C85–C132, C178–C229, C262–C299, C266–C303, C277–C289, C318–C352, C322–C357, and C330–C342. An important for interaction with FLRT2 region spans residues W89–H91. Residues N115 and N226 are each glycosylated (N-linked (GlcNAc...) asparagine). The Ig-like C2-type domain occupies Q164 to S242. 2 consecutive TSP type-1 domains span residues N250–P304 and D306–I358. The helical transmembrane segment at I383–V403 threads the bilayer. The Cytoplasmic segment spans residues T404–L956. Positions L545 to P685 constitute a ZU5 domain. Residues Q862–T939 enclose the Death domain.

Belongs to the unc-5 family. As to quaternary structure, interacts (via extracellular domain) with FLRT2 and FLRT3 (via extracellular domain); the interaction is direct. Has higher affinity for FLRT2. Identified in a complex with FLRT3 and ADGRL3; does not interact with ADGRL3 by itself. In terms of processing, proteolytically cleaved by caspases during apoptosis. The cleavage does not take place when the receptor is associated with netrin ligand. Its cleavage by caspases is required to induce apoptosis.

The protein resides in the cell membrane. Its function is as follows. Receptor for the netrin NTN4 that promotes neuronal cell survival. Plays a role in cell-cell adhesion and cell guidance. Receptor for netrin involved in cell migration. Plays a role in axon guidance by mediating axon repulsion of neuronal growth cones in the developing nervous system upon ligand binding. May play a role in apoptosis in response to DNA damage. It also acts as a dependence receptor required for apoptosis induction when not associated with netrin ligand. Mediates cell-cell adhesion via its interaction with FLRT3 on an adjacent cell. In Rattus norvegicus (Rat), this protein is Netrin receptor UNC5D.